Consider the following 68-residue polypeptide: Beta-defensin 1 (68 aa).

An N-terminal signal peptide occupies residues 1–21 (MRTSYLLLFTLCLLLSEMASG). Positions 22–32 (GNFLTGLGHRS) are excised as a propeptide. 3 disulfides stabilise this stretch: Cys-37–Cys-66, Cys-44–Cys-59, and Cys-49–Cys-67.

This sequence belongs to the beta-defensin family. Monomer. Homodimer.

Its subcellular location is the secreted. It is found in the membrane. In terms of biological role, has bactericidal activity. May act as a ligand for C-C chemokine receptor CCR6. Positively regulates the sperm motility and bactericidal activity in a CCR6-dependent manner. Binds to CCR6 and triggers Ca2+ mobilization in the sperm which is important for its motility. This Pan troglodytes (Chimpanzee) protein is Beta-defensin 1 (DEFB1).